The following is a 309-amino-acid chain: L-aminoadipate-semialdehyde dehydrogenase-phosphopantetheinyl transferase (309 aa).

Residues R47, 86–91 (RTAKGK), and 108–111 (NISH) each bind CoA. Mg(2+) is bound by residues D129 and E181. CoA is bound at residue 181–185 (ESFIK). S258 is modified (phosphoserine).

It belongs to the P-Pant transferase superfamily. AcpS family. As to quaternary structure, monomer. Mg(2+) is required as a cofactor. Detected in heart, skeletal muscle, placenta, testis, brain, pancreas, liver and kidney.

The protein localises to the cytoplasm. Its subcellular location is the cytosol. It catalyses the reaction apo-[ACP] + CoA = holo-[ACP] + adenosine 3',5'-bisphosphate + H(+). It carries out the reaction apo-[ACP] + acetyl-CoA = acetyl-[ACP] + adenosine 3',5'-bisphosphate + H(+). In terms of biological role, catalyzes the post-translational modification of target proteins by phosphopantetheine. Can transfer the 4'-phosphopantetheine moiety from coenzyme A, regardless of whether the CoA is presented in the free thiol form or as an acetyl thioester, to a serine residue of a broad range of acceptors including the acyl carrier domain of FASN. The polypeptide is L-aminoadipate-semialdehyde dehydrogenase-phosphopantetheinyl transferase (AASDHPPT) (Homo sapiens (Human)).